A 739-amino-acid polypeptide reads, in one-letter code: BEL1-like homeodomain protein 2 (739 aa).

Disordered stretches follow at residues 23–73 (SQDY…ESSV) and 143–222 (LMNP…NSQT). Residues 41-58 (NFSNGFDRSDSPNLTTQQ) are compositionally biased toward polar residues. Pro residues predominate over residues 145–155 (NPPPPQQPPSP). Residues 179-190 (TNTTHHQNYTNH) are compositionally biased toward low complexity. Residues 316-332 (SRYTTAAQELLEEFCSV) are SR/KY domain. The interval 341-378 (KLGNSSNPNTCGGDGGGSSPSSAGANKEHPPLSASDRI) is disordered. The tract at residues 376-447 (DRIEHQRRKV…CLKDAVAAQL (72 aa)) is BELL domain. Positions 498-560 (AWRPQRGLPE…NARVRLWKPM (63 aa)) form a DNA-binding region, homeobox. A disordered region spans residues 567–627 (QESKEREREE…TAPDASDADA (61 aa)). A compositionally biased stretch (acidic residues) spans 576 to 585 (EELEENEEDQ). Residues 586–596 (ETKNSNDDKST) show a composition bias toward basic and acidic residues. Low complexity predominate over residues 597–627 (KSNNNESNFTAVRTTSQTPTTTAPDASDADA).

Belongs to the TALE/BELL homeobox family. As to quaternary structure, may form heterodimeric complexes with TALE/KNOX proteins STM, KNAT1/BP, KNAT2 and KNAT5. Interacts with OFP1, OFP2, OFP4 and OFP5. Interacts with KNATM, isoform KNATM-B. As to expression, expressed in lateral organs.

It is found in the nucleus. Its function is as follows. Transcription factor that establishes leaf shape by repressing growth in specific subdomains of the leaf. Negatively regulates knox homeobox gene KNAT1/BP expression. The sequence is that of BEL1-like homeodomain protein 2 (BLH2) from Arabidopsis thaliana (Mouse-ear cress).